Consider the following 127-residue polypeptide: Fluoride-specific ion channel FluC (127 aa).

The next 4 membrane-spanning stretches (helical) occupy residues 4–24 (SLLVIAIGASLGAWLRWLLGM), 37–57 (TVVANMVGGYIIGLAIAFLAA), 68–88 (LIITGFCGGLTTFSTFSAETV), and 96–116 (LLWALGSISLHVVGSLAMTAA). The Na(+) site is built by Gly-75 and Thr-78.

This sequence belongs to the fluoride channel Fluc/FEX (TC 1.A.43) family.

Its subcellular location is the cell inner membrane. It catalyses the reaction fluoride(in) = fluoride(out). Na(+) is not transported, but it plays an essential structural role and its presence is essential for fluoride channel function. Fluoride-specific ion channel. Important for reducing fluoride concentration in the cell, thus reducing its toxicity. The protein is Fluoride-specific ion channel FluC of Pseudomonas syringae pv. maculicola.